Consider the following 124-residue polypeptide: Small ribosomal subunit protein bS6 (124 aa).

The segment at 97–124 (EQGPSAMMRRGDRDRSNRSDRRRDRDAA) is disordered. The segment covering 105–124 (RRGDRDRSNRSDRRRDRDAA) has biased composition (basic and acidic residues).

It belongs to the bacterial ribosomal protein bS6 family.

Its function is as follows. Binds together with bS18 to 16S ribosomal RNA. This chain is Small ribosomal subunit protein bS6, found in Zymomonas mobilis subsp. mobilis (strain ATCC 31821 / ZM4 / CP4).